Here is a 685-residue protein sequence, read N- to C-terminus: DNA ligase (685 aa).

Residues 34 to 38 (DAVFD), 83 to 84 (SL), and Glu-113 contribute to the NAD(+) site. Lys-115 acts as the N6-AMP-lysine intermediate in catalysis. Positions 136, 173, 297, and 321 each coordinate NAD(+). The Zn(2+) site is built by Cys-415, Cys-418, Cys-433, and Cys-438. The 79-residue stretch at 607–685 (QEKLQFSGKT…EQELMTLISN (79 aa)) folds into the BRCT domain.

The protein belongs to the NAD-dependent DNA ligase family. LigA subfamily. Requires Mg(2+) as cofactor. Mn(2+) serves as cofactor.

It catalyses the reaction NAD(+) + (deoxyribonucleotide)n-3'-hydroxyl + 5'-phospho-(deoxyribonucleotide)m = (deoxyribonucleotide)n+m + AMP + beta-nicotinamide D-nucleotide.. In terms of biological role, DNA ligase that catalyzes the formation of phosphodiester linkages between 5'-phosphoryl and 3'-hydroxyl groups in double-stranded DNA using NAD as a coenzyme and as the energy source for the reaction. It is essential for DNA replication and repair of damaged DNA. The protein is DNA ligase of Prochlorococcus marinus (strain SARG / CCMP1375 / SS120).